The primary structure comprises 151 residues: Meiotically up-regulated gene 114 protein (151 aa).

It is found in the cytoplasm. Functionally, has a role in meiosis. This is Meiotically up-regulated gene 114 protein (mug114) from Schizosaccharomyces pombe (strain 972 / ATCC 24843) (Fission yeast).